The chain runs to 321 residues: Ribosomal RNA small subunit methyltransferase H (321 aa).

Residues 29 to 31 (GGH), Asp48, Tyr76, Asp97, and Gln104 each bind S-adenosyl-L-methionine. The segment at 277–321 (LTRGAEPASETEKAENPRAASVRLRAVERTAPNPDHTRKPTGGAS) is disordered.

It belongs to the methyltransferase superfamily. RsmH family.

Its subcellular location is the cytoplasm. It carries out the reaction cytidine(1402) in 16S rRNA + S-adenosyl-L-methionine = N(4)-methylcytidine(1402) in 16S rRNA + S-adenosyl-L-homocysteine + H(+). Specifically methylates the N4 position of cytidine in position 1402 (C1402) of 16S rRNA. In Frankia casuarinae (strain DSM 45818 / CECT 9043 / HFP020203 / CcI3), this protein is Ribosomal RNA small subunit methyltransferase H.